A 159-amino-acid polypeptide reads, in one-letter code: bZIP transcription factor 11 (159 aa).

Positions 1–21 (MESSSSGTTSSTIQTSSGSEE) are enriched in low complexity. A disordered region spans residues 1–47 (MESSSSGTTSSTIQTSSGSEESLMEQRKRKRMLSNRESARRSRMKKQ). The region spanning 25-88 (EQRKRKRMLS…LTVEAENSVL (64 aa)) is the bZIP domain. The tract at residues 27 to 48 (RKRKRMLSNRESARRSRMKKQK) is basic motif. The segment at 53–67 (LTAQVNHLKKENTEI) is leucine-zipper.

In terms of assembly, forms heterodimers with BZIP1, BZIP9, BZIP10, BZIP25 and BZIP63. Interacts with ADA2B. In terms of tissue distribution, highly expressed in stems and flowers. Expressed in root tips, cotyledons, leaf vasculature, embryos, apical parts of siliques and funiculi.

It is found in the nucleus. In terms of biological role, transcription factor that binds to the DNA sequence 5'-ACTCAT-3' in target gene promoters. Promotes POX1/PRODH1 expression in response to hypoosmolarity stress. Positively regulates the expression of ASN1 and POX2/PRODH2 genes, which are involved in amino acid metabolism. Regulates several metabolic pathways such as myo-inositol, raffinose and trehalose. Regulates several trehalose metabolism genes, including TRE1, TPP5 and TPP6. Mediates recruitment of the histone acetylation machinery to activate auxin-induced transcription. Interacts with ADA2B adapter protein to promote ADA2B-mediated recruitment of SAGA-like histone acetyltransferase complexes to specific auxin-responsive genes. This is bZIP transcription factor 11 from Arabidopsis thaliana (Mouse-ear cress).